A 288-amino-acid polypeptide reads, in one-letter code: Urease accessory protein UreD (288 aa).

It belongs to the UreD family. UreD, UreF and UreG form a complex that acts as a GTP-hydrolysis-dependent molecular chaperone, activating the urease apoprotein by helping to assemble the nickel containing metallocenter of UreC. The UreE protein probably delivers the nickel.

It is found in the cytoplasm. Functionally, required for maturation of urease via the functional incorporation of the urease nickel metallocenter. The protein is Urease accessory protein UreD of Dechloromonas aromatica (strain RCB).